A 55-amino-acid polypeptide reads, in one-letter code: Ovomucoid (55 aa).

In terms of domain architecture, Kazal-like spans 5 to 55 (VDCSEHPKPACTLDYRPICGSDSKTYSNKCDFCNAVMDSNGTLTLSHFGKC). Intrachain disulfides connect Cys-7–Cys-37, Cys-15–Cys-34, and Cys-23–Cys-55. N-linked (GlcNAc...) asparagine glycosylation is present at Asn-44.

It localises to the secreted. The sequence is that of Ovomucoid from Dacelo novaeguineae (Laughing kookaburra).